Consider the following 204-residue polypeptide: MEKLTKRQQDILDFIKLKVQEKGYPPSVREIGQAVGLASSSTVHGHLSRLEEKGYIRRDPTKPRAIEILGDNRTETQSVIQVPIIGKVTAGLPITAVESVEDHFPLPASIVAGADQVFMLRISGDSMIEAGIFDGDLVVVRQQQSAYNGEIVVALTEDNEATVKRFYKEKDHFRLQPENSSLEPIILKQVSVIGKVIGVYRDLH.

Positions 28 to 48 (VREIGQAVGLASSSTVHGHLS) form a DNA-binding region, H-T-H motif. Catalysis depends on for autocatalytic cleavage activity residues S126 and K164.

This sequence belongs to the peptidase S24 family. As to quaternary structure, homodimer.

The enzyme catalyses Hydrolysis of Ala-|-Gly bond in repressor LexA.. Represses a number of genes involved in the response to DNA damage (SOS response), including recA and lexA. In the presence of single-stranded DNA, RecA interacts with LexA causing an autocatalytic cleavage which disrupts the DNA-binding part of LexA, leading to derepression of the SOS regulon and eventually DNA repair. In Bacillus mycoides (strain KBAB4) (Bacillus weihenstephanensis), this protein is LexA repressor.